Reading from the N-terminus, the 282-residue chain is Putative 4-diphosphocytidyl-2-C-methyl-D-erythritol kinase (282 aa).

Residue Lys-9 is part of the active site. 93 to 103 (PVSAGLAGGST) contributes to the ATP binding site. Asp-135 is a catalytic residue.

The protein belongs to the GHMP kinase family. IspE subfamily.

It catalyses the reaction 4-CDP-2-C-methyl-D-erythritol + ATP = 4-CDP-2-C-methyl-D-erythritol 2-phosphate + ADP + H(+). Its function is as follows. Catalyzes the phosphorylation of the position 2 hydroxy group of 4-diphosphocytidyl-2C-methyl-D-erythritol. The polypeptide is Putative 4-diphosphocytidyl-2-C-methyl-D-erythritol kinase (Staphylococcus saprophyticus subsp. saprophyticus (strain ATCC 15305 / DSM 20229 / NCIMB 8711 / NCTC 7292 / S-41)).